We begin with the raw amino-acid sequence, 605 residues long: Exo-beta-1,3-glucanase (605 aa).

Positions 1 to 23 (MHVPPTDPARSAPPASPHRRRRP) are disordered. The first 44 residues, 1–44 (MHVPPTDPARSAPPASPHRRRRPKALGLTALAAAMLMAVPTTQA), serve as a signal peptide directing secretion. Substrate contacts are provided by residues glutamine 174, 194 to 196 (YGW), glutamine 217, 446 to 449 (WRAD), and 480 to 481 (EH). Glutamate 502 acts as the Proton donor in catalysis. Tyrosine 505 serves as a coordination point for substrate.

Belongs to the glycosyl hydrolase 55 family.

The protein resides in the secreted. The enzyme catalyses Successive hydrolysis of beta-D-glucose units from the non-reducing ends of (1-&gt;3)-beta-D-glucans, releasing alpha-glucose.. Functionally, exo-beta-1,3-glucanase that specifically hydrolyzes laminarin and laminarioligosaccharides, producing glucose and laminaribiose as end products. The sequence is that of Exo-beta-1,3-glucanase from Streptomyces sp. (strain SirexAA-E / ActE).